An 817-amino-acid polypeptide reads, in one-letter code: V-type proton ATPase subunit a1 (817 aa).

The Cytoplasmic portion of the chain corresponds to 1–422; the sequence is MEEFLDKLPQ…PAVYSVVTYP (422 aa). Residues 97-133 adopt a coiled-coil conformation; that stretch reads DIALGDLERQLADHEHEVLEMNSNSEKLRQTYNELLE. Residues 423 to 443 traverse the membrane as a helical segment; the sequence is FLFAVMFGDWGHGLCLLLGAL. The Vacuolar portion of the chain corresponds to 444 to 468; the sequence is YLLARERKLSTQKLGSFMEMLFGGR. The helical transmembrane segment at 469–489 threads the bilayer; it reads YVILLMALFSIYCGLIYNEFF. Topologically, residues 490 to 547 are cytoplasmic; the sequence is SVPFHIFGGSAYKCRDTTCSDAYTVGLIKYRDPYPFGVDPSWRGSRTELPYLNSLKMK. Residues 548-568 form a helical membrane-spanning segment; sequence MSILLGIAQMNLGLILSFFNA. Residues 569-580 lie on the Vacuolar side of the membrane; sequence RFFGSSLDIRYQ. A helical transmembrane segment spans residues 581–601; that stretch reads FIPQMIFLNSLFGYLSLLIII. At 602–639 the chain is on the cytoplasmic side; the sequence is KWCTGSQADLYHVMIYMFLSPTEELGENELFWGQRPLQ. A helical membrane pass occupies residues 640–660; sequence IVLLLLAFIAVPWMLFPKPFA. At 661 to 758 the chain is on the vacuolar side; that stretch reads LRKIHMERFQ…VLLLAWGYEN (98 aa). Residues 759 to 779 form a helical membrane-spanning segment; the sequence is ILIRLIGVAVFAFATAFILLM. At 780 to 817 the chain is on the cytoplasmic side; the sequence is METLSAFLHALRLHWVEFMGKFFNGDGYKFKPFSFALI.

This sequence belongs to the V-ATPase 116 kDa subunit family. V-ATPase is a heteromultimeric enzyme composed of a peripheral catalytic V1 complex (components A to H) attached to an integral membrane V0 proton pore complex (components: a, c, c'', d and e).

The protein resides in the vacuole membrane. It localises to the golgi apparatus. The protein localises to the trans-Golgi network membrane. In terms of biological role, essential component of the vacuolar proton pump (V-ATPase), a multimeric enzyme that catalyzes the translocation of protons across the membranes. Required for assembly and activity of the V-ATPase. Required during cell expansion. In Arabidopsis thaliana (Mouse-ear cress), this protein is V-type proton ATPase subunit a1.